The following is a 935-amino-acid chain: Peptidyl-glycine alpha-amidating monooxygenase A (935 aa).

The signal sequence occupies residues 1-36 (MASLSSSFLVLFLLFQNSCYCFRSPLSVFKRYEEST). Residues 1-390 (MASLSSSFLV…KREEEEVLDQ (390 aa)) are peptidylglycine alpha-hydroxylating monooxygenase. At 37-825 (RSLSNDCLGT…VQESSAGVSF (789 aa)) the chain is on the intragranular side. Disulfide bonds link Cys-43–Cys-182, Cys-77–Cys-122, Cys-110–Cys-127, Cys-223–Cys-330, and Cys-289–Cys-311. Cu(2+) contacts are provided by His-103 and His-104. The Cu(2+) site is built by His-168, His-238, His-240, and Met-310. The disordered stretch occupies residues 362–385 (HGHHHTEAEPEKNTGLQQPKREEE). Residues 391 to 712 (DVHLEEDTDW…SPSKAEHRSV (322 aa)) are peptidyl-alpha-hydroxyglycine alpha-amidating lyase. Position 426 (Arg-426) interacts with a protein. 3 NHL repeats span residues 463-504 (SKVL…LGAG), 512-557 (LGRA…FSPN), and 565-609 (GEET…FHAE). Disulfide bonds link Cys-526-Cys-547 and Cys-594-Cys-605. Residues Tyr-546 and Arg-598 each contribute to the a protein site. A glycan (N-linked (GlcNAc...) asparagine) is linked at Asn-658. The NHL 4 repeat unit spans residues 662–705 (GDILDTFIPARKNFDMPHDIAAADDGTVYVGDAHANAVWKFSPS). Positions 728–751 (FETHIRSRPKTNESVEKQTQEKQQ) are enriched in basic and acidic residues. Disordered stretches follow at residues 728 to 764 (FETH…TQEK) and 778 to 812 (QEKQ…TQEK). N-linked (GlcNAc...) asparagine glycosylation is present at Asn-739. The span at 755–764 (NSAGVSTQEK) shows a compositional bias: polar residues. Residues 826-846 (VLIITLLIIPIAVLIAIAIFI) form a helical membrane-spanning segment. The Cytoplasmic portion of the chain corresponds to 847–935 (RWRKVRMYGG…PIPPAPVSSS (89 aa)). The disordered stretch occupies residues 896–935 (KGFDRLSTEGSDQEKDDDDGSDSEEEYSAPPIPPAPVSSS). Acidic residues predominate over residues 909-922 (EKDDDDGSDSEEEY). Residues 925-935 (PPIPPAPVSSS) show a composition bias toward pro residues.

The protein in the C-terminal section; belongs to the peptidyl-alpha-hydroxyglycine alpha-amidating lyase family. It in the N-terminal section; belongs to the copper type II ascorbate-dependent monooxygenase family. In terms of assembly, monomer. Zn(2+) is required as a cofactor. It depends on Cu(2+) as a cofactor.

The protein localises to the cytoplasmic vesicle. Its subcellular location is the secretory vesicle membrane. The catalysed reaction is a [peptide]-C-terminal glycine + 2 L-ascorbate + O2 = a [peptide]-C-terminal (2S)-2-hydroxyglycine + 2 monodehydro-L-ascorbate radical + H2O. It carries out the reaction a [peptide]-C-terminal (2S)-2-hydroxyglycine = a [peptide]-C-terminal amide + glyoxylate. Functionally, bifunctional enzyme that catalyzes amidation of the C-terminus of proteins. Alpha-amidation is present at the C-terminus of many endocrine hormones and neuropeptides and is required for their activity. C-terminal amidation also takes place in response to protein fragmentation triggered by oxidative stress, promoting degradation of amidated protein fragments by the proteasome. Alpha-amidation involves two sequential reactions, both of which are catalyzed by separate catalytic domains of the enzyme. The first step, catalyzed by peptidyl alpha-hydroxylating monooxygenase (PHM) domain, is the copper-, ascorbate-, and O2- dependent stereospecific hydroxylation (with S stereochemistry) at the alpha-carbon (C-alpha) of the C-terminal glycine of the peptidylglycine substrate. The second step, catalyzed by the peptidylglycine amidoglycolate lyase (PAL) domain, is the zinc-dependent cleavage of the N-C-alpha bond, producing the alpha-amidated peptide and glyoxylate. The chain is Peptidyl-glycine alpha-amidating monooxygenase A (pam-a) from Xenopus laevis (African clawed frog).